A 404-amino-acid polypeptide reads, in one-letter code: L-cysteine:1D-myo-inositol 2-amino-2-deoxy-alpha-D-glucopyranoside ligase (404 aa).

The segment at 1-20 (MRTWPTPDVPPLPRTGAPAP) is disordered. Zn(2+) is bound at residue cysteine 45. L-cysteinyl-5'-AMP-binding positions include 45–48 (CGIT), threonine 60, and 83–85 (NVT). Positions 47–57 (ITPYDATHLGH) match the 'HIGH' region motif. The 'ERGGDP' region signature appears at 185–190 (ERGGDP). The segment at 185-216 (ERGGDPDRPGKKHPLDPALWRGEQPGEPSWDG) is disordered. Basic and acidic residues predominate over residues 186–199 (RGGDPDRPGKKHPL). Tryptophan 226 serves as a coordination point for L-cysteinyl-5'-AMP. Residue cysteine 230 coordinates Zn(2+). L-cysteinyl-5'-AMP is bound at residue 248–250 (GAD). Histidine 255 provides a ligand contact to Zn(2+). Leucine 280 serves as a coordination point for L-cysteinyl-5'-AMP. A 'KMSKS' region motif is present at residues 286-290 (KMSKS).

The protein belongs to the class-I aminoacyl-tRNA synthetase family. MshC subfamily. In terms of assembly, monomer. Zn(2+) serves as cofactor.

It carries out the reaction 1D-myo-inositol 2-amino-2-deoxy-alpha-D-glucopyranoside + L-cysteine + ATP = 1D-myo-inositol 2-(L-cysteinylamino)-2-deoxy-alpha-D-glucopyranoside + AMP + diphosphate + H(+). In terms of biological role, catalyzes the ATP-dependent condensation of GlcN-Ins and L-cysteine to form L-Cys-GlcN-Ins. In Xylanimonas cellulosilytica (strain DSM 15894 / JCM 12276 / CECT 5975 / KCTC 9989 / LMG 20990 / NBRC 107835 / XIL07), this protein is L-cysteine:1D-myo-inositol 2-amino-2-deoxy-alpha-D-glucopyranoside ligase.